A 143-amino-acid polypeptide reads, in one-letter code: MLMGQYEHTIDSKGRVIIPAKFREELGEKFVLTKGLDNCLFVYSLDEWKNIEEKLKTLPLTKKDARAFTRFFLAGAVECEVDKQGRILIPSHLREHAKIEKDVIFIGVSTRVEIWSKEVWEEYSKSTDVSFEEIAEHLDNFNI.

SpoVT-AbrB domains lie at 5–47 and 76–119; these read QYEH…SLDE and AVEC…SKEV.

It belongs to the MraZ family. Forms oligomers.

It localises to the cytoplasm. The protein resides in the nucleoid. In Caldanaerobacter subterraneus subsp. tengcongensis (strain DSM 15242 / JCM 11007 / NBRC 100824 / MB4) (Thermoanaerobacter tengcongensis), this protein is Transcriptional regulator MraZ.